Reading from the N-terminus, the 310-residue chain is Prostate androgen-regulated mucin-like protein 1 homolog (310 aa).

Residues 1–20 form the signal peptide; sequence MVYKTLFALCILTAGWRVQS. Residues 21-258 lie on the Extracellular side of the membrane; the sequence is LPTSAPLSVS…EVEHALSSGS (238 aa). A compositionally biased stretch (polar residues) spans 40-74; it reads TIWTSSPQNTDADTASPSNGTHNNSVLPVTASAPT. The interval 40–224 is disordered; it reads TIWTSSPQNT…VPQEKTPPTT (185 aa). Asn-58, Asn-62, and Asn-80 each carry an N-linked (GlcNAc...) asparagine glycan. Over residues 92-103 the composition is skewed to polar residues; it reads SPGSNWEGTNTD. The segment covering 150–209 has biased composition (low complexity); the sequence is SPQAPASSPSSLSTSPPEVFSVSVTTNHSSTVTSTQPTGAPTAPESPTEESSSDHTPTSH. An N-linked (GlcNAc...) asparagine glycan is attached at Asn-176. The helical transmembrane segment at 259–279 threads the bilayer; it reads IAAITVTVIAVVLLVFGVAAY. Residues 280 to 310 are Cytoplasmic-facing; sequence LKIRHSSYGRLLDDHDYGSWGNYNNPLYDDS. At Ser-298 the chain carries Phosphoserine.

It belongs to the PARM family. In terms of processing, highly N-glycosylated and O-glycosylated.

It localises to the cell membrane. It is found in the golgi apparatus membrane. Its subcellular location is the endosome membrane. Functionally, may regulate TLP1 expression and telomerase activity, thus enabling certain prostatic cells to resist apoptosis. In Pongo abelii (Sumatran orangutan), this protein is Prostate androgen-regulated mucin-like protein 1 homolog (PARM1).